Here is a 288-residue protein sequence, read N- to C-terminus: Elongation factor Ts (288 aa).

Residues 80–83 (TDFL) form an involved in Mg(2+) ion dislocation from EF-Tu region.

This sequence belongs to the EF-Ts family.

Its subcellular location is the cytoplasm. Functionally, associates with the EF-Tu.GDP complex and induces the exchange of GDP to GTP. It remains bound to the aminoacyl-tRNA.EF-Tu.GTP complex up to the GTP hydrolysis stage on the ribosome. This Pseudomonas fluorescens (strain ATCC BAA-477 / NRRL B-23932 / Pf-5) protein is Elongation factor Ts.